Reading from the N-terminus, the 518-residue chain is Sodium-dependent glucose transporter 1 (518 aa).

12 helical membrane-spanning segments follow: residues 19-39 (TFQD…FIFV), 53-73 (GFLV…SATT), 82-102 (CKTA…IGIL), 107-127 (NVLI…ALHF), 139-159 (LAKL…SDFH), 221-241 (FRRA…FFFY), 307-327 (TSSL…IATS), 347-367 (YTTI…LGEM), 376-396 (LQGK…ASIA), 400-420 (LFPV…KEDR), 438-458 (EEEN…EMIE), and 466-486 (SIIE…YNQY). Over residues 414–426 (RQRKEDRKSEDQK) the composition is skewed to basic and acidic residues. Residues 414–448 (RQRKEDRKSEDQKALLSSSGLNEYEEENEEEDAEK) form a disordered region. Over residues 436-448 (EYEEENEEEDAEK) the composition is skewed to acidic residues.

Belongs to the major facilitator superfamily.

The protein localises to the apical cell membrane. Its function is as follows. May function as a sodium-dependent glucose transporter. Potential channels for urea in the inner medulla of kidney. This is Sodium-dependent glucose transporter 1 from Homo sapiens (Human).